Reading from the N-terminus, the 220-residue chain is Octanoyltransferase (220 aa).

Positions 29–217 (GRAPEMIWLL…CFEETFGPLP (189 aa)) constitute a BPL/LPL catalytic domain. Substrate-binding positions include 68–75 (RGGQYTYH), 148–150 (AIG), and 161–163 (GLS). C179 serves as the catalytic Acyl-thioester intermediate.

It belongs to the LipB family.

Its subcellular location is the cytoplasm. It catalyses the reaction octanoyl-[ACP] + L-lysyl-[protein] = N(6)-octanoyl-L-lysyl-[protein] + holo-[ACP] + H(+). The protein operates within protein modification; protein lipoylation via endogenous pathway; protein N(6)-(lipoyl)lysine from octanoyl-[acyl-carrier-protein]: step 1/2. Catalyzes the transfer of endogenously produced octanoic acid from octanoyl-acyl-carrier-protein onto the lipoyl domains of lipoate-dependent enzymes. Lipoyl-ACP can also act as a substrate although octanoyl-ACP is likely to be the physiological substrate. This is Octanoyltransferase from Dinoroseobacter shibae (strain DSM 16493 / NCIMB 14021 / DFL 12).